We begin with the raw amino-acid sequence, 370 residues long: Mitochondrial carrier protein SCaMC-3L (370 aa).

3 Solcar repeats span residues Glu90–Tyr176, Pro184–Phe269, and Pro280–Thr367. 6 consecutive transmembrane segments (helical) span residues Leu96–Leu113, Gly151–Phe170, Ser194–Met207, Tyr245–Tyr263, Gly282–Val306, and Gly342–Tyr361.

Belongs to the mitochondrial carrier (TC 2.A.29) family.

It is found in the mitochondrion inner membrane. It catalyses the reaction Mg(2+)(out) + phosphate(in) + ATP(out) = Mg(2+)(in) + phosphate(out) + ATP(in). It carries out the reaction ADP(out) + phosphate(in) + H(+)(out) = ADP(in) + phosphate(out) + H(+)(in). Its function is as follows. Calcium-independent ATP-Mg/Pi exchanger that catalyzes the electroneutral exchange of Mg-ATP or free ADP against an hydrogenphosphate and participates in the net transport of adenine nucleotides across the mitochondria inner membrane. In Homo sapiens (Human), this protein is Mitochondrial carrier protein SCaMC-3L.